Here is a 156-residue protein sequence, read N- to C-terminus: Class I hydrophobin B (156 aa).

A signal peptide spans 1 to 18 (MQFTLSAVVLALAGFSAA). 4 disulfides stabilise this stretch: cysteine 52–cysteine 130, cysteine 60–cysteine 124, cysteine 61–cysteine 101, and cysteine 131–cysteine 149.

It belongs to the fungal hydrophobin family.

Its subcellular location is the secreted. The protein localises to the cell wall. Its function is as follows. Aerial growth, conidiation, and dispersal of filamentous fungi in the environment rely upon a capability of their secreting small amphipathic proteins called hydrophobins (HPBs) with low sequence identity. Class I can self-assemble into an outermost layer of rodlet bundles on aerial cell surfaces, conferring cellular hydrophobicity that supports fungal growth, development and dispersal; whereas Class II form highly ordered films at water-air interfaces through intermolecular interactions but contribute nothing to the rodlet structure. In P.expansum, hydrophobins contribute to germination, tolerance to cold stress and mycotoxins patulin and citrinin production. HfbA and HfbB are essential for fungal surface hydrophobicity. In Penicillium expansum (Blue mold rot fungus), this protein is Class I hydrophobin B.